Here is a 481-residue protein sequence, read N- to C-terminus: Protein hedgehog (481 aa).

Cys93 carries N-palmitoyl cysteine lipidation. Ca(2+)-binding residues include Glu157, Glu158, Asp163, Thr193, Glu194, Asp197, and Asp199. A lipid anchor (Cholesterol glycine ester) is attached at Gly265.

This sequence belongs to the hedgehog family. As to quaternary structure, interacts with shf. Post-translationally, the C-terminal part of the hedgehog protein precursor displays an autoproteolysis activity that results in the cleavage of the full-length protein into two parts (N-product and C-product). In addition, the C-terminal part displays a cholesterol transferase activity that results by the covalent attachment of a cholesterol moiety to the C-terminal of the newly generated N-product. The N-product is the active species in both local and long-range signaling, whereas the C-product has no signaling activity. Cholesterylation is required for N-product targeting to lipid rafts and multimerization. In terms of processing, N-palmitoylation by Rasp of the hedgehog N-product, within the secretory pathway, is required for the embryonic and larval patterning activities of the hedgehog signal.

It is found in the nucleus. The protein resides in the cytoplasm. The protein localises to the cell membrane. It carries out the reaction glycyl-L-cysteinyl-[protein] + cholesterol + H(+) = [protein]-C-terminal glycyl cholesterol ester + N-terminal L-cysteinyl-[protein]. The C-terminal part of the hedgehog protein precursor displays an autoproteolysis activity that results in the cleavage of the full-length protein into two parts (N-product and C-product). In addition, the C-terminal part displays a cholesterol transferase activity that results by the covalent attachment of a cholesterol moiety to the C-terminal of the newly generated N-product. Once cleaved, the C-product has no signaling activity and diffuses from the cell. In terms of biological role, the dually lipidated hedgehog protein N-product is a morphogen which is essential for a variety of patterning events during development. Establishes the anterior-posterior axis of the embryonic segments and patterns the larval imaginal disks. Binds to the patched (ptc) receptor, which functions in association with smoothened (smo), to activate the transcription of target genes wingless (wg), decapentaplegic (dpp) and ptc. In the absence of hh, ptc represses the constitutive signaling activity of smo through fused (fu). Essential component of a signaling pathway which regulates the Duox-dependent gut immune response to bacterial uracil; required to activate Cad99C-dependent endosome formation, norpA-dependent Ca2+ mobilization and p38 MAPK, which are essential steps in the Duox-dependent production of reactive oxygen species (ROS) in response to intestinal bacterial infection. During photoreceptor differentiation, it up-regulates transcription of Ubr3, which in turn promotes the hh-signaling pathway by mediating the ubiquitination and degradation of cos. This Drosophila persimilis (Fruit fly) protein is Protein hedgehog.